The chain runs to 303 residues: Di/tripeptide transport system permease protein DppC (303 aa).

The next 7 membrane-spanning stretches (helical) occupy residues 33–53 (ALGGLLFMLLIVFCALFAPWV), 103–123 (LLIGLSSVVISLIPGILLGLL), 131–151 (AGPLIMRLMDIMLALPSLLLA), 152–172 (VAIVAILGPGLINTVIAIAIV), 202–222 (AGTLRLMFVCVLPNCMAPLIV), 225–245 (TLSFSSAILDAAALGFLGLGV), and 267–287 (WWVVSLPGLTILLSVLAINLM). The 190-residue stretch at 99-288 (ARLSLLIGLS…LSVLAINLMG (190 aa)) folds into the ABC transmembrane type-1 domain.

This sequence belongs to the binding-protein-dependent transport system permease family. OppBC subfamily. As to quaternary structure, the complex is composed of two ATP-binding proteins (DppD and DppF), two transmembrane proteins (DppB and DppC) and a solute-binding protein (DppA1-A5). Five orthologous SBPs (DppA1-A5) are present in P.aeruginosa, which increases the substrate specificity of the DppBCDF transporter.

It localises to the cell inner membrane. In terms of biological role, part of the ABC transporter DppABCDF involved in the uptake of various di/tripeptides. Is also involved in the uptake of phaseolotoxin, a toxic tripeptide inhibiting the enzyme ornithine carbamoyltransferase. Responsible for the translocation of the substrate across the membrane. This chain is Di/tripeptide transport system permease protein DppC, found in Pseudomonas aeruginosa (strain UCBPP-PA14).